An 812-amino-acid polypeptide reads, in one-letter code: Lon protease (812 aa).

The 194-residue stretch at 22 to 215 (YAVLPLRDIV…KALSFMEAEI (194 aa)) folds into the Lon N-terminal domain. 367–374 (GPPGVGKT) contributes to the ATP binding site. One can recognise a Lon proteolytic domain in the interval 602-783 (EDQVGVVTGL…GEVLKHTLVR (182 aa)). Active-site residues include Ser689 and Lys732. The interval 787–812 (PIEWTEQENPTAVPPVEDEAGASLAH) is disordered.

This sequence belongs to the peptidase S16 family. As to quaternary structure, homohexamer. Organized in a ring with a central cavity.

It is found in the cytoplasm. The enzyme catalyses Hydrolysis of proteins in presence of ATP.. Its function is as follows. ATP-dependent serine protease that mediates the selective degradation of mutant and abnormal proteins as well as certain short-lived regulatory proteins. Required for cellular homeostasis and for survival from DNA damage and developmental changes induced by stress. Degrades polypeptides processively to yield small peptide fragments that are 5 to 10 amino acids long. Binds to DNA in a double-stranded, site-specific manner. The chain is Lon protease from Brucella suis biovar 1 (strain 1330).